The primary structure comprises 502 residues: Maturase K (502 aa).

Belongs to the intron maturase 2 family. MatK subfamily.

It is found in the plastid. The protein resides in the chloroplast. Usually encoded in the trnK tRNA gene intron. Probably assists in splicing its own and other chloroplast group II introns. This chain is Maturase K, found in Ipomoea purpurea (Common morning glory).